A 297-amino-acid polypeptide reads, in one-letter code: NADH-ubiquinone oxidoreductase chain 1 (297 aa).

9 helical membrane passes run 1–21, 34–54, 66–86, 99–119, 139–159, 170–190, 206–228, 235–257, and 277–297; these read MKSL…TLAE, PNHV…KLIL, WLFV…WLVI, LSIL…IYTG, VSYE…GATL, GTVL…AALA, LVAG…GEYA, TVLN…IWIR, and LPFL…LDLF.

It belongs to the complex I subunit 1 family.

It is found in the mitochondrion inner membrane. It carries out the reaction a ubiquinone + NADH + 5 H(+)(in) = a ubiquinol + NAD(+) + 4 H(+)(out). Core subunit of the mitochondrial membrane respiratory chain NADH dehydrogenase (Complex I) that is believed to belong to the minimal assembly required for catalysis. Complex I functions in the transfer of electrons from NADH to the respiratory chain. The immediate electron acceptor for the enzyme is believed to be ubiquinone. The sequence is that of NADH-ubiquinone oxidoreductase chain 1 from Hyaloraphidium curvatum (Lower fungus).